The chain runs to 233 residues: MTPHINAKIGDFYPQCLLCGDPLRVSYIAKKFLQDAKEITNVRNMLGFSGKYKGKGISLMGHGMGIASCTIYVTELIKTYQVKELLRIGTCGAISPKVGLKDIIMAIGASTDSKTNRVRFLNHDLSATPDFELSLRAYQTAKRLGIDLKIGNVFSSDFFYSFETHAFDLMAQYNHLAIEMEAAGLYATAMELSAKALCLCSVSDHLITKEALSPKERVESFDNMITLALEMMS.

Histidine 4 contributes to the a purine D-ribonucleoside binding site. Phosphate contacts are provided by residues glycine 20, arginine 24, arginine 43, and 87 to 90; that span reads RIGT. Residues 179-181 and 203-204 contribute to the a purine D-ribonucleoside site; these read EME and SD. Aspartate 204 (proton donor) is an active-site residue.

This sequence belongs to the PNP/UDP phosphorylase family. Homohexamer; trimer of homodimers.

It carries out the reaction a purine D-ribonucleoside + phosphate = a purine nucleobase + alpha-D-ribose 1-phosphate. It catalyses the reaction a purine 2'-deoxy-D-ribonucleoside + phosphate = a purine nucleobase + 2-deoxy-alpha-D-ribose 1-phosphate. Its function is as follows. Catalyzes the reversible phosphorolytic breakdown of the N-glycosidic bond in the beta-(deoxy)ribonucleoside molecules, with the formation of the corresponding free purine bases and pentose-1-phosphate. This chain is Purine nucleoside phosphorylase DeoD-type, found in Helicobacter pylori (strain G27).